A 381-amino-acid chain; its full sequence is N-acetyl-alpha-D-glucosaminyl L-malate synthase (381 aa).

Positions 16, 94, and 122 each coordinate (S)-malate. Positions 206, 262, and 290 each coordinate UDP.

The protein belongs to the glycosyltransferase group 1 family. Glycosyltransferase 4 subfamily. In terms of assembly, dimer of tetramers.

It carries out the reaction (S)-malate + UDP-N-acetyl-alpha-D-glucosamine = (S)-malyl N-acetyl-alpha-D-glucosaminide + UDP + H(+). Involved in bacillithiol (BSH) biosynthesis. Catalyzes the first step of the pathway, the formation of N-acetylglucosaminylmalate (GlcNAc-Mal) from UDP-N-acetylglucosamine (UDP-GlcNAc) and L-malate. This Bacillus anthracis protein is N-acetyl-alpha-D-glucosaminyl L-malate synthase.